We begin with the raw amino-acid sequence, 1323 residues long: ABC transporter C family member 12 (1323 aa).

In terms of domain architecture, ABC transmembrane type-1 1 spans 110–396 (HCISLFFYSI…LPILIALGIQ (287 aa)). 6 consecutive transmembrane segments (helical) span residues 111–131 (CISL…PEIL), 152–172 (MGYY…FCNY), 227–247 (VFGI…CLAL), 252–272 (IGWP…FNGL), 338–358 (ILIA…FSTY), and 375–395 (SYLN…ALGI). The region spanning 428-652 (VYMKNSTTTW…KLEFASLLQE (225 aa)) is the ABC transporter 1 domain. 464 to 471 (GSVGSGKS) is an ATP binding site. Residues 657-695 (ENTKGDDSDDDDDKKDDDKKEEKVEKPKQSDKDGTLISE) are disordered. Residues 672–690 (DDDKKEEKVEKPKQSDKDG) show a composition bias toward basic and acidic residues. Helical transmembrane passes span 712–732 (VTAG…LETG), 772–792 (IYIG…FSFF), 840–860 (LIAT…ATLI), 862–882 (ISII…LFFI), and 952–972 (WLGL…CIFI). The ABC transmembrane type-1 2 domain maps to 720–1010 (FLFAMILFLL…GVLQAADTET (291 aa)). Residues 1047-1281 (IKFDNLVMRY…QNGLLTWLVN (235 aa)) enclose the ABC transporter 2 domain. An ATP-binding site is contributed by 1081-1088 (GRTGAGKS).

The protein belongs to the ABC transporter superfamily. ABCC family. Conjugate transporter (TC 3.A.1.208) subfamily.

It is found in the membrane. This chain is ABC transporter C family member 12 (abcC12), found in Dictyostelium discoideum (Social amoeba).